A 130-amino-acid polypeptide reads, in one-letter code: MLKTLPPTLREKKRYVAFEIISESEFPQKEVVGIIRSAVLIYCGIHGCSKVNPWLIDYRHPSGILRVSREYLDLLRSSLMLFDEYKRNPINIRIIGVSNSVKHIREKFLHVSHEPYYKVIQKLKKRNLVK.

Belongs to the eukaryotic/archaeal RNase P protein component 2 family. Consists of a catalytic RNA component and at least 4-5 protein subunits.

The protein resides in the cytoplasm. It catalyses the reaction Endonucleolytic cleavage of RNA, removing 5'-extranucleotides from tRNA precursor.. Its function is as follows. Part of ribonuclease P, a protein complex that generates mature tRNA molecules by cleaving their 5'-ends. The polypeptide is Ribonuclease P protein component 2 (Methanococcus vannielii (strain ATCC 35089 / DSM 1224 / JCM 13029 / OCM 148 / SB)).